Consider the following 471-residue polypeptide: Methionine aminopeptidase 2 (471 aa).

Disordered regions lie at residues 16–80 (VVDD…IDRF) and 92–139 (CEHP…DFNR). Positions 32–47 (EDGDDNDDAVNEGEAV) are enriched in acidic residues. A compositionally biased stretch (basic residues) spans 52-65 (KKKKKKNKKKKKKG). The segment covering 119–139 (AEERAKDDAKHGSDDPLDFNR) has biased composition (basic and acidic residues). H224 contributes to the substrate binding site. Positions 244, 255, and 324 each coordinate a divalent metal cation. H332 contacts substrate. E357 and E452 together coordinate a divalent metal cation.

It belongs to the peptidase M24A family. Methionine aminopeptidase eukaryotic type 2 subfamily. The cofactor is Co(2+). It depends on Zn(2+) as a cofactor. Mn(2+) serves as cofactor. Fe(2+) is required as a cofactor.

It is found in the cytoplasm. It catalyses the reaction Release of N-terminal amino acids, preferentially methionine, from peptides and arylamides.. Its function is as follows. Cotranslationally removes the N-terminal methionine from nascent proteins. The N-terminal methionine is often cleaved when the second residue in the primary sequence is small and uncharged (Met-Ala-, Cys, Gly, Pro, Ser, Thr, or Val). This is Methionine aminopeptidase 2 from Yarrowia lipolytica (strain CLIB 122 / E 150) (Yeast).